We begin with the raw amino-acid sequence, 490 residues long: Beta-glucosidase 42 (490 aa).

A beta-D-glucoside contacts are provided by residues Gln-35, His-137, 182–183, Tyr-317, and Glu-388; that span reads NE. Glu-183 serves as the catalytic Proton donor. The active-site Nucleophile is Glu-388. N-linked (GlcNAc...) asparagine glycosylation is present at Asn-420. A beta-D-glucoside is bound by residues Trp-437, 444-445, and Phe-453; that span reads EW.

This sequence belongs to the glycosyl hydrolase 1 family. In terms of tissue distribution, expressed at low levels predominantly in root epidermal cells.

It carries out the reaction Hydrolysis of terminal, non-reducing beta-D-glucosyl residues with release of beta-D-glucose.. Glucosidase that hydrolyzes scopolin and various beta-glucosides, cellooligosaccharides (mainly cellotriose) and laminarioligosaccharides. Can use p-nitrophenyl-beta-glucosides (pNP beta-Glc) and p-nitrophenyl-beta-D-fucosides (pNP beta-D-Fuc) as substrates, and, to a lower extent, beta-galactosides, beta-mannosides and beta-xylosides. Involved in the secretion of root-derived phenolics upon iron ions (Fe) depletion. Promotes disease resistance toward B.cinerea, H.arabidopsidis and P.syringae pv. tomato DC3000. Required during rhizobacteria-mediated (e.g. P.fluorescens WCS417r) broad-spectrum induced systemic resistance (ISR) against several pathogens. The protein is Beta-glucosidase 42 of Arabidopsis thaliana (Mouse-ear cress).